A 296-amino-acid chain; its full sequence is Myozenin-1 (296 aa).

At Ser-82 the chain carries Phosphoserine. 2 stretches are compositionally biased toward gly residues: residues 105–117 (FSYG…GQAG) and 134–170 (SGFG…QAGG). Residues 105 to 172 (FSYGKGSSGG…GSGDQAGGDG (68 aa)) are disordered.

It belongs to the myozenin family. As to quaternary structure, interacts with ACTN2, ACTN3, FLNA, FLNB, FLNC, LDB3, PPP3CA and TCAP. Interacts via its C-terminal region with MYOT. Expressed primarily in skeletal muscle and specifically enriched in the gastrocnemius, which is composed predominantly of fast-twitch muscle fibers. Detected at lower levels in heart.

Its subcellular location is the nucleus. The protein resides in the cell projection. It is found in the pseudopodium. Functionally, myozenins may serve as intracellular binding proteins involved in linking Z-disk proteins such as alpha-actinin, gamma-filamin, TCAP/telethonin, LDB3/ZASP and localizing calcineurin signaling to the sarcomere. Plays an important role in the modulation of calcineurin signaling. May play a role in myofibrillogenesis. This Mus musculus (Mouse) protein is Myozenin-1.